We begin with the raw amino-acid sequence, 218 residues long: ETS domain-containing protein ets-7 (218 aa).

Residues 12–93 constitute a DNA-binding region (ETS); sequence QRLLNFLRGL…KGKDSRYCFL (82 aa). Residues 131–161 show a composition bias toward low complexity; that stretch reads TSNFSLQSSPSSSSNSSSARTMSATSSPTSS. The tract at residues 131 to 162 is disordered; it reads TSNFSLQSSPSSSSNSSSARTMSATSSPTSSL.

It belongs to the ETS family.

Its subcellular location is the nucleus. Its function is as follows. Probable transcription factor. Involved in responses to oxidative stress. The protein is ETS domain-containing protein ets-7 of Caenorhabditis elegans.